The following is a 424-amino-acid chain: Histidinol dehydrogenase (424 aa).

Tyr-121, Gln-183, and Asn-206 together coordinate NAD(+). Residues Ser-229, Gln-251, and His-254 each coordinate substrate. Zn(2+)-binding residues include Gln-251 and His-254. Residues Glu-319 and His-320 each act as proton acceptor in the active site. Positions 320, 353, 407, and 412 each coordinate substrate. Asp-353 lines the Zn(2+) pocket. His-412 contributes to the Zn(2+) binding site.

This sequence belongs to the histidinol dehydrogenase family. Zn(2+) is required as a cofactor.

The enzyme catalyses L-histidinol + 2 NAD(+) + H2O = L-histidine + 2 NADH + 3 H(+). It functions in the pathway amino-acid biosynthesis; L-histidine biosynthesis; L-histidine from 5-phospho-alpha-D-ribose 1-diphosphate: step 9/9. Catalyzes the sequential NAD-dependent oxidations of L-histidinol to L-histidinaldehyde and then to L-histidine. The chain is Histidinol dehydrogenase from Halalkalibacterium halodurans (strain ATCC BAA-125 / DSM 18197 / FERM 7344 / JCM 9153 / C-125) (Bacillus halodurans).